A 580-amino-acid chain; its full sequence is Microcin-J25 export ATP-binding/permease protein McjD (580 aa).

Transmembrane regions (helical) follow at residues 25–45 (FFSM…SPLI), 66–86 (VLLA…VFLF), 143–163 (VSQN…VVLS), 167–187 (WFSA…NTRL), 261–281 (AVIL…NGVV), and 286–306 (FIMI…IGAL). Residues 25-312 (FFSMLFITSL…IGALLSEIRQ (288 aa)) enclose the ABC transmembrane type-1 domain. The region spanning 345–578 (LSIRELSFSY…NEYISGLASV (234 aa)) is the ABC transporter domain. 378–385 (GPSGSGKS) is an ATP binding site.

This sequence belongs to the ABC transporter superfamily. In terms of assembly, homodimer.

The protein resides in the cell inner membrane. Its function is as follows. Is able to protect a cell, which harbors the plasmid pTUC100 encoding microcin J25, against microcin J25. Is required for microcin J25 export out of the producing cells. This is Microcin-J25 export ATP-binding/permease protein McjD (mcjD) from Escherichia coli.